We begin with the raw amino-acid sequence, 240 residues long: MLTLGVNIDHVATIRQARRTVEPDPLAAAVLAELGGADGITVHLREDRRHIQDRDVRLLRQTVRTHLNLEMAPTEEMISIALDIKPDYVTLVPEKREEVTTEGGIDLVSNFTRFAQVVDQLQGAGIPVSWFIDADPAQIEAASKTGAKFIELHTGKYAEALNEESRAQELESLKKGCEQALSLGLRVNAGHGLTYWNVYPVACLPGMEELNIGHSIISRAVLIGIDKAVREMKLAMRGQV.

A 3-amino-2-oxopropyl phosphate-binding site is contributed by asparagine 7. Position 9–10 (9–10) interacts with 1-deoxy-D-xylulose 5-phosphate; the sequence is DH. Residue arginine 18 participates in 3-amino-2-oxopropyl phosphate binding. The active-site Proton acceptor is the histidine 43. Residues arginine 45 and histidine 50 each contribute to the 1-deoxy-D-xylulose 5-phosphate site. The active-site Proton acceptor is the glutamate 70. Threonine 100 provides a ligand contact to 1-deoxy-D-xylulose 5-phosphate. Histidine 191 acts as the Proton donor in catalysis. 3-amino-2-oxopropyl phosphate contacts are provided by residues glycine 192 and 213-214; that span reads GH.

This sequence belongs to the PNP synthase family. As to quaternary structure, homooctamer; tetramer of dimers.

Its subcellular location is the cytoplasm. It catalyses the reaction 3-amino-2-oxopropyl phosphate + 1-deoxy-D-xylulose 5-phosphate = pyridoxine 5'-phosphate + phosphate + 2 H2O + H(+). It functions in the pathway cofactor biosynthesis; pyridoxine 5'-phosphate biosynthesis; pyridoxine 5'-phosphate from D-erythrose 4-phosphate: step 5/5. Functionally, catalyzes the complicated ring closure reaction between the two acyclic compounds 1-deoxy-D-xylulose-5-phosphate (DXP) and 3-amino-2-oxopropyl phosphate (1-amino-acetone-3-phosphate or AAP) to form pyridoxine 5'-phosphate (PNP) and inorganic phosphate. The protein is Pyridoxine 5'-phosphate synthase of Gloeothece citriformis (strain PCC 7424) (Cyanothece sp. (strain PCC 7424)).